The primary structure comprises 887 residues: DNA gyrase subunit A (887 aa).

The Topo IIA-type catalytic domain occupies 35-501 (LPDVRDGLKP…GFENLEDEDL (467 aa)). Tyr123 functions as the O-(5'-phospho-DNA)-tyrosine intermediate in the catalytic mechanism. Residues 528 to 534 (QNRGGRG) carry the GyrA-box motif. The disordered stretch occupies residues 811–864 (KEDAEDETNEDEQSTSTVSEDGTEQQREAVVNDETPGNAIHTEVIDSEENDEDG). Residues 813 to 823 (DAEDETNEDEQ) are compositionally biased toward acidic residues.

The protein belongs to the type II topoisomerase GyrA/ParC subunit family. As to quaternary structure, heterotetramer, composed of two GyrA and two GyrB chains. In the heterotetramer, GyrA contains the active site tyrosine that forms a transient covalent intermediate with DNA, while GyrB binds cofactors and catalyzes ATP hydrolysis.

It localises to the cytoplasm. The enzyme catalyses ATP-dependent breakage, passage and rejoining of double-stranded DNA.. In terms of biological role, a type II topoisomerase that negatively supercoils closed circular double-stranded (ds) DNA in an ATP-dependent manner to modulate DNA topology and maintain chromosomes in an underwound state. Negative supercoiling favors strand separation, and DNA replication, transcription, recombination and repair, all of which involve strand separation. Also able to catalyze the interconversion of other topological isomers of dsDNA rings, including catenanes and knotted rings. Type II topoisomerases break and join 2 DNA strands simultaneously in an ATP-dependent manner. The sequence is that of DNA gyrase subunit A from Staphylococcus aureus (strain COL).